A 144-amino-acid chain; its full sequence is Large ribosomal subunit protein uL11 (144 aa).

It belongs to the universal ribosomal protein uL11 family. As to quaternary structure, part of the ribosomal stalk of the 50S ribosomal subunit. Interacts with L10 and the large rRNA to form the base of the stalk. L10 forms an elongated spine to which L12 dimers bind in a sequential fashion forming a multimeric L10(L12)X complex. One or more lysine residues are methylated.

Functionally, forms part of the ribosomal stalk which helps the ribosome interact with GTP-bound translation factors. This chain is Large ribosomal subunit protein uL11, found in Rhodococcus opacus (strain B4).